The chain runs to 212 residues: Imidazole glycerol phosphate synthase subunit HisH (212 aa).

The 206-residue stretch at 3-208 (RIVIVDYGMG…GRMVCDLIST (206 aa)) folds into the Glutamine amidotransferase type-1 domain. Cysteine 81 serves as the catalytic Nucleophile. Residues histidine 183 and glutamate 185 contribute to the active site.

In terms of assembly, heterodimer of HisH and HisF.

The protein localises to the cytoplasm. The catalysed reaction is 5-[(5-phospho-1-deoxy-D-ribulos-1-ylimino)methylamino]-1-(5-phospho-beta-D-ribosyl)imidazole-4-carboxamide + L-glutamine = D-erythro-1-(imidazol-4-yl)glycerol 3-phosphate + 5-amino-1-(5-phospho-beta-D-ribosyl)imidazole-4-carboxamide + L-glutamate + H(+). It carries out the reaction L-glutamine + H2O = L-glutamate + NH4(+). Its pathway is amino-acid biosynthesis; L-histidine biosynthesis; L-histidine from 5-phospho-alpha-D-ribose 1-diphosphate: step 5/9. Functionally, IGPS catalyzes the conversion of PRFAR and glutamine to IGP, AICAR and glutamate. The HisH subunit catalyzes the hydrolysis of glutamine to glutamate and ammonia as part of the synthesis of IGP and AICAR. The resulting ammonia molecule is channeled to the active site of HisF. The polypeptide is Imidazole glycerol phosphate synthase subunit HisH (Symbiobacterium thermophilum (strain DSM 24528 / JCM 14929 / IAM 14863 / T)).